A 480-amino-acid polypeptide reads, in one-letter code: Proline--tRNA ligase (480 aa).

The protein belongs to the class-II aminoacyl-tRNA synthetase family. ProS type 3 subfamily. As to quaternary structure, homodimer.

The protein localises to the cytoplasm. It carries out the reaction tRNA(Pro) + L-proline + ATP = L-prolyl-tRNA(Pro) + AMP + diphosphate. Its function is as follows. Catalyzes the attachment of proline to tRNA(Pro) in a two-step reaction: proline is first activated by ATP to form Pro-AMP and then transferred to the acceptor end of tRNA(Pro). The protein is Proline--tRNA ligase of Chloroflexus aggregans (strain MD-66 / DSM 9485).